The primary structure comprises 171 residues: Endoribonuclease YbeY (171 aa).

The Zn(2+) site is built by His126, His130, and His136.

It belongs to the endoribonuclease YbeY family. Zn(2+) serves as cofactor.

It localises to the cytoplasm. Functionally, single strand-specific metallo-endoribonuclease involved in late-stage 70S ribosome quality control and in maturation of the 3' terminus of the 16S rRNA. The protein is Endoribonuclease YbeY of Rhizobium leguminosarum bv. trifolii (strain WSM2304).